We begin with the raw amino-acid sequence, 262 residues long: Acyl-[acyl-carrier-protein]--UDP-N-acetylglucosamine O-acyltransferase (262 aa).

Belongs to the transferase hexapeptide repeat family. LpxA subfamily. Homotrimer.

The protein resides in the cytoplasm. The enzyme catalyses a (3R)-hydroxyacyl-[ACP] + UDP-N-acetyl-alpha-D-glucosamine = a UDP-3-O-[(3R)-3-hydroxyacyl]-N-acetyl-alpha-D-glucosamine + holo-[ACP]. It functions in the pathway glycolipid biosynthesis; lipid IV(A) biosynthesis; lipid IV(A) from (3R)-3-hydroxytetradecanoyl-[acyl-carrier-protein] and UDP-N-acetyl-alpha-D-glucosamine: step 1/6. Functionally, involved in the biosynthesis of lipid A, a phosphorylated glycolipid that anchors the lipopolysaccharide to the outer membrane of the cell. This is Acyl-[acyl-carrier-protein]--UDP-N-acetylglucosamine O-acyltransferase from Paraburkholderia phytofirmans (strain DSM 17436 / LMG 22146 / PsJN) (Burkholderia phytofirmans).